We begin with the raw amino-acid sequence, 145 residues long: Nickel-responsive regulator (145 aa).

Positions 77, 88, 90, and 96 each coordinate Ni(2+).

This sequence belongs to the transcriptional regulatory CopG/NikR family. As to quaternary structure, homotetramer. Requires Ni(2+) as cofactor.

In terms of biological role, transcriptional repressor of the nikABCDE operon. Is active in the presence of excessive concentrations of intracellular nickel. This Edwardsiella ictaluri (strain 93-146) protein is Nickel-responsive regulator.